Consider the following 369-residue polypeptide: Chorismate synthase (369 aa).

Residues arginine 48 and arginine 54 each contribute to the NADP(+) site. FMN contacts are provided by residues 125–127 (RSS), 238–239 (NA), glycine 283, 298–302 (KPTSS), and arginine 324.

It belongs to the chorismate synthase family. As to quaternary structure, homotetramer. FMNH2 serves as cofactor.

The catalysed reaction is 5-O-(1-carboxyvinyl)-3-phosphoshikimate = chorismate + phosphate. It functions in the pathway metabolic intermediate biosynthesis; chorismate biosynthesis; chorismate from D-erythrose 4-phosphate and phosphoenolpyruvate: step 7/7. Functionally, catalyzes the anti-1,4-elimination of the C-3 phosphate and the C-6 proR hydrogen from 5-enolpyruvylshikimate-3-phosphate (EPSP) to yield chorismate, which is the branch point compound that serves as the starting substrate for the three terminal pathways of aromatic amino acid biosynthesis. This reaction introduces a second double bond into the aromatic ring system. This Acidiphilium cryptum (strain JF-5) protein is Chorismate synthase.